Consider the following 229-residue polypeptide: Phosphoglycolate phosphatase (229 aa).

D13 acts as the Nucleophile in catalysis. The Mg(2+) site is built by D13, D15, and D178.

This sequence belongs to the HAD-like hydrolase superfamily. CbbY/CbbZ/Gph/YieH family. Requires Mg(2+) as cofactor.

It catalyses the reaction 2-phosphoglycolate + H2O = glycolate + phosphate. It functions in the pathway organic acid metabolism; glycolate biosynthesis; glycolate from 2-phosphoglycolate: step 1/1. Specifically catalyzes the dephosphorylation of 2-phosphoglycolate. Is involved in the dissimilation of the intracellular 2-phosphoglycolate formed during the DNA repair of 3'-phosphoglycolate ends, a major class of DNA lesions induced by oxidative stress. This Photobacterium profundum (strain SS9) protein is Phosphoglycolate phosphatase.